A 226-amino-acid polypeptide reads, in one-letter code: ATP synthase subunit a (226 aa).

The next 6 membrane-spanning stretches (helical) occupy residues 17–37 (FSYFFHIGLVALIAVIVAMMA), 79–99 (LVATLGIIVFFSNIIGILPGF), 105–125 (SLNLTLSLAIIVFVYYHFEGI), 134–154 (FAHFMGPIKLLAPLMFPIEIV), 176–196 (LFLMVILALVPYIAPLPAYVL), and 199–219 (FMAFLQAFIFMILTYVYLAGA).

It belongs to the ATPase A chain family. F-type ATPases have 2 components, CF(1) - the catalytic core - and CF(0) - the membrane proton channel. CF(1) has five subunits: alpha(3), beta(3), gamma(1), delta(1), epsilon(1). CF(0) has three main subunits: a(1), b(2) and c(9-12). The alpha and beta chains form an alternating ring which encloses part of the gamma chain. CF(1) is attached to CF(0) by a central stalk formed by the gamma and epsilon chains, while a peripheral stalk is formed by the delta and b chains.

It localises to the cell inner membrane. Key component of the proton channel; it plays a direct role in the translocation of protons across the membrane. The polypeptide is ATP synthase subunit a (Campylobacter jejuni subsp. doylei (strain ATCC BAA-1458 / RM4099 / 269.97)).